Consider the following 299-residue polypeptide: Trans-aconitate 3-methyltransferase (299 aa).

Ser2 is modified (N-acetylserine).

Belongs to the methyltransferase superfamily. Tam family.

It localises to the cytoplasm. The enzyme catalyses trans-aconitate + S-adenosyl-L-methionine = (E)-2-(methoxycarbonylmethyl)but-2-enedioate + S-adenosyl-L-homocysteine. Functionally, catalyzes the S-adenosylmethionine monomethyl esterification of trans-aconitate and 3-isopropylmalate at high affinity and of other molecules like cis-aconitate, isocitrate, and citrate at lower velocities and affinities. The function of trans-aconitate methylation appears to be in reducing the toxicity of this spontaneous breakdown product of cis-aconitate. The role of 3-isopropylmalate methylation is unclear but may represent a metabolic branch at 3-isopropylmalate, where some of the material is taken in the pathway leading to leucine and some is taken in a pathway to the 3-isopropylmalate methyl ester, a molecule that provides a signal to switch from vegetative to invasive growth in response to amino acid starvation. This is Trans-aconitate 3-methyltransferase (TMT1) from Saccharomyces cerevisiae (strain YJM789) (Baker's yeast).